The chain runs to 203 residues: Proteasome subunit beta 2 (203 aa).

Residues 1-9 (MGEEFQVGA) constitute a propeptide, removed in mature form; by autocatalysis. Residue T10 is the Nucleophile of the active site.

The protein belongs to the peptidase T1B family. The 20S proteasome core is composed of 14 alpha and 14 beta subunits that assemble into four stacked heptameric rings, resulting in a barrel-shaped structure. The two inner rings, each composed of seven catalytic beta subunits, are sandwiched by two outer rings, each composed of seven alpha subunits. The catalytic chamber with the active sites is on the inside of the barrel. Has a gated structure, the ends of the cylinder being occluded by the N-termini of the alpha-subunits. Is capped at one or both ends by the proteasome regulatory ATPase, PAN.

It localises to the cytoplasm. The catalysed reaction is Cleavage of peptide bonds with very broad specificity.. With respect to regulation, the formation of the proteasomal ATPase PAN-20S proteasome complex, via the docking of the C-termini of PAN into the intersubunit pockets in the alpha-rings, triggers opening of the gate for substrate entry. Interconversion between the open-gate and close-gate conformations leads to a dynamic regulation of the 20S proteasome proteolysis activity. Functionally, component of the proteasome core, a large protease complex with broad specificity involved in protein degradation. The sequence is that of Proteasome subunit beta 2 from Pyrobaculum neutrophilum (strain DSM 2338 / JCM 9278 / NBRC 100436 / V24Sta) (Thermoproteus neutrophilus).